Consider the following 427-residue polypeptide: Enolase (427 aa).

Glutamine 163 serves as a coordination point for (2R)-2-phosphoglycerate. The active-site Proton donor is the glutamate 205. Mg(2+)-binding residues include aspartate 242, glutamate 285, and aspartate 312. Lysine 337, arginine 366, serine 367, and lysine 388 together coordinate (2R)-2-phosphoglycerate. Lysine 337 acts as the Proton acceptor in catalysis.

It belongs to the enolase family. It depends on Mg(2+) as a cofactor.

Its subcellular location is the cytoplasm. The protein resides in the secreted. It is found in the cell surface. It carries out the reaction (2R)-2-phosphoglycerate = phosphoenolpyruvate + H2O. It participates in carbohydrate degradation; glycolysis; pyruvate from D-glyceraldehyde 3-phosphate: step 4/5. Catalyzes the reversible conversion of 2-phosphoglycerate (2-PG) into phosphoenolpyruvate (PEP). It is essential for the degradation of carbohydrates via glycolysis. The polypeptide is Enolase (Albidiferax ferrireducens (strain ATCC BAA-621 / DSM 15236 / T118) (Rhodoferax ferrireducens)).